Reading from the N-terminus, the 132-residue chain is Histone H2B.1 (132 aa).

A compositionally biased stretch (low complexity) spans 1–13 (MSAKASKAPASKA). Residues 1 to 39 (MSAKASKAPASKAPAEKKPAAKKTSSSTDPSKKRTKARK) form a disordered region. Lys7 carries the N6-acetyllysine; alternate modification. A Glycyl lysine isopeptide (Lys-Gly) (interchain with G-Cter in SUMO); alternate cross-link involves residue Lys7. At Ser11 the chain carries Phosphoserine. N6-acetyllysine is present on Lys12. Lys17 is modified (N6-acetyllysine; alternate). Lys17 is covalently cross-linked (Glycyl lysine isopeptide (Lys-Gly) (interchain with G-Cter in SUMO); alternate). Lys18 participates in a covalent cross-link: Glycyl lysine isopeptide (Lys-Gly) (interchain with G-Cter in SUMO). Residue Lys125 forms a Glycyl lysine isopeptide (Lys-Gly) (interchain with G-Cter in ubiquitin) linkage.

This sequence belongs to the histone H2B family. In terms of assembly, the nucleosome is a histone octamer containing two molecules each of H2A, H2B, H3 and H4 assembled in one H3-H4 heterotetramer and two H2A-H2B heterodimers. The octamer wraps approximately 147 bp of DNA. Post-translationally, monoubiquitinated by the UBC2-BRE1 complex to form H2BK123ub1. H2BK123ub1 gives a specific tag for epigenetic transcriptional activation and is also prerequisite for H3K4me and H3K79me formation. H2BK123ub1 also modulates the formation of double-strand breaks during meiosis and is a prerequisite for DNA-damage checkpoint activation. In terms of processing, phosphorylated by STE20 to form H2BS10ph during progression through meiotic prophase. May be correlated with chromosome condensation. Acetylated by GCN5 to form H2BK11ac and H2BK16ac. H2BK16ac can also be formed by ESA1. Acetylation of N-terminal lysines and particularly formation of H2BK11acK16ac has a positive effect on transcription. Post-translationally, sumoylation to form H2BK6su and probably also H2BK16su or H2BK17su, occurs preferentially near the telomeres and represses gene transcription.

It localises to the nucleus. Its subcellular location is the chromosome. Its function is as follows. Core component of nucleosome. Nucleosomes wrap and compact DNA into chromatin, limiting DNA accessibility to the cellular machineries which require DNA as a template. Histones thereby play a central role in transcription regulation, DNA repair, DNA replication and chromosomal stability. DNA accessibility is regulated via a complex set of post-translational modifications of histones, also called histone code, and nucleosome remodeling. The chain is Histone H2B.1 (HTB1) from Kluyveromyces lactis (strain ATCC 8585 / CBS 2359 / DSM 70799 / NBRC 1267 / NRRL Y-1140 / WM37) (Yeast).